Reading from the N-terminus, the 234-residue chain is Endonuclease V (234 aa).

Mg(2+)-binding residues include Asp36 and Asp104.

Belongs to the endonuclease V family. Mg(2+) is required as a cofactor.

It is found in the cytoplasm. The enzyme catalyses Endonucleolytic cleavage at apurinic or apyrimidinic sites to products with a 5'-phosphate.. DNA repair enzyme involved in the repair of deaminated bases. Selectively cleaves double-stranded DNA at the second phosphodiester bond 3' to a deoxyinosine leaving behind the intact lesion on the nicked DNA. This chain is Endonuclease V, found in Yersinia pestis.